We begin with the raw amino-acid sequence, 432 residues long: 3-phosphoshikimate 1-carboxyvinyltransferase (432 aa).

Positions 22, 23, and 27 each coordinate 3-phosphoshikimate. Position 22 (Lys-22) interacts with phosphoenolpyruvate. 2 residues coordinate phosphoenolpyruvate: Gly-96 and Arg-127. 7 residues coordinate 3-phosphoshikimate: Ser-173, Ser-174, Gln-175, Ser-201, Asp-316, Asn-339, and Lys-343. Gln-175 contacts phosphoenolpyruvate. Catalysis depends on Asp-316, which acts as the Proton acceptor. The phosphoenolpyruvate site is built by Arg-347, Arg-391, and Lys-416.

Belongs to the EPSP synthase family. As to quaternary structure, monomer.

Its subcellular location is the cytoplasm. It catalyses the reaction 3-phosphoshikimate + phosphoenolpyruvate = 5-O-(1-carboxyvinyl)-3-phosphoshikimate + phosphate. Its pathway is metabolic intermediate biosynthesis; chorismate biosynthesis; chorismate from D-erythrose 4-phosphate and phosphoenolpyruvate: step 6/7. In terms of biological role, catalyzes the transfer of the enolpyruvyl moiety of phosphoenolpyruvate (PEP) to the 5-hydroxyl of shikimate-3-phosphate (S3P) to produce enolpyruvyl shikimate-3-phosphate and inorganic phosphate. In Haemophilus influenzae (strain 86-028NP), this protein is 3-phosphoshikimate 1-carboxyvinyltransferase.